Consider the following 110-residue polypeptide: MKYLAAYLLLVQGGNAAPSAADIKAVVESVGAEVDEARINELLSSLEGKGSLEEIIAEGQKKFATVPTGGASSAAAGAAGAAAGGDAAEEEKEEEAKEESDDDMGFGLFD.

The residue at position 29 (serine 29) is a Phosphoserine. Lysine 49 participates in a covalent cross-link: Glycyl lysine isopeptide (Lys-Gly) (interchain with G-Cter in ubiquitin). The disordered stretch occupies residues valine 66–aspartate 110. The span at glycine 69–aspartate 86 shows a compositional bias: low complexity. The segment covering alanine 87 to methionine 104 has biased composition (acidic residues). At serine 100 the chain carries Phosphoserine.

Belongs to the eukaryotic ribosomal protein P1/P2 family. Component of the large ribosomal subunit (LSU). Mature yeast ribosomes consist of a small (40S) and a large (60S) subunit. The 40S small subunit contains 1 molecule of ribosomal RNA (18S rRNA) and 33 different proteins (encoded by 57 genes). The large 60S subunit contains 3 rRNA molecules (25S, 5.8S and 5S rRNA) and 46 different proteins (encoded by 81 genes). The 5 acidic ribosomal P-proteins form the stalk structure of the 60S subunit. They are organized as a pentameric complex in which uL10/P0 interacts with 2 heterodimers, P1A-P2B and P1B-P2A. The N-terminus is not modified.

It is found in the cytoplasm. In terms of biological role, component of the ribosome, a large ribonucleoprotein complex responsible for the synthesis of proteins in the cell. The small ribosomal subunit (SSU) binds messenger RNAs (mRNAs) and translates the encoded message by selecting cognate aminoacyl-transfer RNA (tRNA) molecules. The large subunit (LSU) contains the ribosomal catalytic site termed the peptidyl transferase center (PTC), which catalyzes the formation of peptide bonds, thereby polymerizing the amino acids delivered by tRNAs into a polypeptide chain. The nascent polypeptides leave the ribosome through a tunnel in the LSU and interact with protein factors that function in enzymatic processing, targeting, and the membrane insertion of nascent chains at the exit of the ribosomal tunnel. The chain is Large ribosomal subunit protein P2B from Saccharomyces cerevisiae (strain ATCC 204508 / S288c) (Baker's yeast).